The chain runs to 153 residues: UPF0251 protein CT0950 (153 aa).

The protein belongs to the UPF0251 family.

The polypeptide is UPF0251 protein CT0950 (Chlorobaculum tepidum (strain ATCC 49652 / DSM 12025 / NBRC 103806 / TLS) (Chlorobium tepidum)).